The following is a 163-amino-acid chain: Protein-export protein SecB (163 aa).

This sequence belongs to the SecB family. In terms of assembly, homotetramer, a dimer of dimers. One homotetramer interacts with 1 SecA dimer.

Its subcellular location is the cytoplasm. One of the proteins required for the normal export of preproteins out of the cell cytoplasm. It is a molecular chaperone that binds to a subset of precursor proteins, maintaining them in a translocation-competent state. It also specifically binds to its receptor SecA. This is Protein-export protein SecB from Pseudomonas aeruginosa (strain LESB58).